The following is a 1207-amino-acid chain: ATP-dependent helicase/nuclease subunit A (1207 aa).

The UvrD-like helicase ATP-binding domain maps to 2–472; it reads PQFTKEQQQA…ILLSDNFRST (471 aa). An ATP-binding site is contributed by 23 to 30; that stretch reads ASAGSGKT. Residues 492-783 form the UvrD-like helicase C-terminal domain; the sequence is GGIDYSKEGQ…RLMTIHGSKG (292 aa).

Belongs to the helicase family. AddA subfamily. In terms of assembly, heterodimer of AddA and AddB/RexB. Requires Mg(2+) as cofactor.

It catalyses the reaction Couples ATP hydrolysis with the unwinding of duplex DNA by translocating in the 3'-5' direction.. It carries out the reaction ATP + H2O = ADP + phosphate + H(+). In terms of biological role, the heterodimer acts as both an ATP-dependent DNA helicase and an ATP-dependent, dual-direction single-stranded exonuclease. Recognizes the chi site generating a DNA molecule suitable for the initiation of homologous recombination. The AddA nuclease domain is required for chi fragment generation; this subunit has the helicase and 3' -&gt; 5' nuclease activities. This chain is ATP-dependent helicase/nuclease subunit A, found in Lactobacillus acidophilus (strain ATCC 700396 / NCK56 / N2 / NCFM).